The primary structure comprises 517 residues: B3 domain-containing protein REM1 (517 aa).

A DNA-binding region (TF-B3 1) is located at residues 7–92 (FSLFQQKFRT…VFHVAVVSPS (86 aa)). The span at 115-140 (DDVDDDDYGQDDEDDDDDDDEGEDNI) shows a compositional bias: acidic residues. The segment at 115–158 (DDVDDDDYGQDDEDDDDDDDEGEDNIENISEKTDKRQEADSSSD) is disordered. Basic and acidic residues predominate over residues 143–157 (ISEKTDKRQEADSSS). 2 consecutive DNA-binding regions (TF-B3) follow at residues 162 to 259 (FITA…CPQE) and 285 to 385 (FLIV…FCSK). The tract at residues 393–415 (GKGNQRTRKKRACETAPQPRNVK) is disordered.

As to expression, expressed in the shoot apical meristem (SAM), in the inflorescence apex and flowers.

It is found in the nucleus. Its function is as follows. May play a role in flower development. This is B3 domain-containing protein REM1 (REM1) from Arabidopsis thaliana (Mouse-ear cress).